Reading from the N-terminus, the 443-residue chain is ATP-dependent protease ATPase subunit HslU (443 aa).

Residues isoleucine 18, 60–65, aspartate 256, glutamate 321, and arginine 393 contribute to the ATP site; that span reads GVGKTE.

This sequence belongs to the ClpX chaperone family. HslU subfamily. As to quaternary structure, a double ring-shaped homohexamer of HslV is capped on each side by a ring-shaped HslU homohexamer. The assembly of the HslU/HslV complex is dependent on binding of ATP.

It localises to the cytoplasm. Its function is as follows. ATPase subunit of a proteasome-like degradation complex; this subunit has chaperone activity. The binding of ATP and its subsequent hydrolysis by HslU are essential for unfolding of protein substrates subsequently hydrolyzed by HslV. HslU recognizes the N-terminal part of its protein substrates and unfolds these before they are guided to HslV for hydrolysis. In Vibrio cholerae serotype O1 (strain ATCC 39315 / El Tor Inaba N16961), this protein is ATP-dependent protease ATPase subunit HslU.